Here is a 458-residue protein sequence, read N- to C-terminus: Argininosuccinate lyase (458 aa).

The protein belongs to the lyase 1 family. Argininosuccinate lyase subfamily.

Its subcellular location is the cytoplasm. It carries out the reaction 2-(N(omega)-L-arginino)succinate = fumarate + L-arginine. Its pathway is amino-acid biosynthesis; L-arginine biosynthesis; L-arginine from L-ornithine and carbamoyl phosphate: step 3/3. The chain is Argininosuccinate lyase from Salmonella heidelberg (strain SL476).